The sequence spans 246 residues: Exosome complex component Rrp41 (246 aa).

The protein belongs to the RNase PH family. Rrp41 subfamily. In terms of assembly, component of the archaeal exosome complex. Forms a hexameric ring-like arrangement composed of 3 Rrp41-Rrp42 heterodimers. The hexameric ring associates with a trimer of Rrp4 and/or Csl4 subunits.

It localises to the cytoplasm. Its function is as follows. Catalytic component of the exosome, which is a complex involved in RNA degradation. Has 3'-&gt;5' exoribonuclease activity. Can also synthesize heteromeric RNA-tails. This chain is Exosome complex component Rrp41, found in Pyrobaculum calidifontis (strain DSM 21063 / JCM 11548 / VA1).